The primary structure comprises 383 residues: Decapping nuclease RAI1 (383 aa).

Glutamate 166 is an a divalent metal cation binding site. Residue glutamate 215 coordinates substrate. A divalent metal cation contacts are provided by aspartate 217, glutamate 235, and leucine 236. Positions 237 and 261 each coordinate substrate.

The protein belongs to the DXO/Dom3Z family. Interacts with RAT1; the interaction is direct, stabilizes RAT1 protein structure and stimulates its exoribonuclease activity. The interaction also stimulates RAI1 pyrophosphohydrolase activity, probably by recruiting it to mRNA substrates. A divalent metal cation serves as cofactor.

The protein resides in the nucleus. It carries out the reaction a 5'-end NAD(+)-phospho-ribonucleoside in mRNA + H2O = a 5'-end phospho-ribonucleoside in mRNA + NAD(+) + H(+). The catalysed reaction is a 5'-end (N(7)-methyl 5'-triphosphoguanosine)-ribonucleoside-ribonucleotide in mRNA + H2O = a (N(7)-methyl 5'-triphosphoguanosine)-nucleoside + a 5'-end phospho-ribonucleoside in mRNA + H(+). The enzyme catalyses a 5'-end triphospho-ribonucleoside in mRNA + H2O = a 5'-end phospho-ribonucleoside in mRNA + diphosphate + H(+). Functionally, decapping enzyme for NAD-capped RNAs: specifically hydrolyzes the nicotinamide adenine dinucleotide (NAD) cap from a subset of RNAs by removing the entire NAD moiety from the 5'-end of an NAD-capped RNA. The NAD-cap is present at the 5'-end of some RNAs and snoRNAs. In contrast to the canonical 5'-end N7 methylguanosine (m7G) cap, the NAD cap promotes mRNA decay. Also acts as a non-canonical decapping enzyme that removes the entire cap structure of m7G capped or incompletely capped RNAs. Has decapping activity toward incomplete 5'-end m7G cap mRNAs such as unmethylated 5'-end-capped RNA (cap0), while it has no activity toward 2'-O-ribose methylated m7G cap (cap1). Also possesses RNA 5'-pyrophosphohydrolase activity by hydrolyzing the 5'-end triphosphate to release pyrophosphates. Stimulates exoribonuclease activity of Rat1, allowing it to degrade RNAs with stable secondary structure more effectively. This is Decapping nuclease RAI1 from Lachancea thermotolerans (strain ATCC 56472 / CBS 6340 / NRRL Y-8284) (Yeast).